Here is a 413-residue protein sequence, read N- to C-terminus: S-adenosylmethionine synthase (413 aa).

His15 is a binding site for ATP. Asp17 contributes to the Mg(2+) binding site. Glu43 provides a ligand contact to K(+). Residues Glu56 and Gln100 each contribute to the L-methionine site. A flexible loop region spans residues 100–110 (QSPDISQGVNE). ATP contacts are provided by residues 171-173 (DGK), 248-249 (KF), Asp257, 263-264 (RK), Ala280, and Lys284. An L-methionine-binding site is contributed by Asp257. An L-methionine-binding site is contributed by Lys288.

Belongs to the AdoMet synthase family. As to quaternary structure, homotetramer; dimer of dimers. The cofactor is Mg(2+). K(+) is required as a cofactor.

It localises to the cytoplasm. The enzyme catalyses L-methionine + ATP + H2O = S-adenosyl-L-methionine + phosphate + diphosphate. It participates in amino-acid biosynthesis; S-adenosyl-L-methionine biosynthesis; S-adenosyl-L-methionine from L-methionine: step 1/1. Catalyzes the formation of S-adenosylmethionine (AdoMet) from methionine and ATP. The overall synthetic reaction is composed of two sequential steps, AdoMet formation and the subsequent tripolyphosphate hydrolysis which occurs prior to release of AdoMet from the enzyme. The polypeptide is S-adenosylmethionine synthase (Prochlorococcus marinus (strain AS9601)).